The chain runs to 391 residues: Cyclin-B1-2 (391 aa).

It belongs to the cyclin family. Cyclin AB subfamily.

This is Cyclin-B1-2 (CYCB1-2) from Oryza sativa subsp. japonica (Rice).